The following is a 586-amino-acid chain: MSRSNSIYTEDIEMYPTHNEQHLTREYTKPDGQTKSEKLNFEGAYINSHGTLSKTTTREIEGDLDSETSSHSSDDKVDPTQQITAETKAPYTLLSYGQKWGMVAILTMCGFWSSLGSPIYYPALRQLEKQFNVDENMVNVTVVVYLLFQGISPTVSGGLADCFGRRPIILAGMLIYVIASIGLACAPSYGVIIFLRCIQSIGISPTIAISSGVVGDFTLKHERGTFVGATSGFVLLGQCFGSLIGAVLTARWDWRAIFWFLTIGCGSCFLIAFLILPETKRTIAGNLSIKPKRFINRAPIFLLGPVRRRFKYDNPDYETLDPTIPKLDLSSAGKILVLPEIILSLFPSGLLFAMWTLMLSSISSGLSVAPYNYHLVIIGVCYLPGGIGGLMGSFFTGRIIDMYFKRKIKKFEQDKANGLIPQDAEINMFKVRLVCLLPQNFLAVVAYLLFGWSIDKGWRIESILITSFVCSYCAMSTLSTSTTLLVDLYPTKSSTASSCFNFVRCSLSTIFMGCFAKMKAAMTVGGTFTFLCALVFFFNFLMFIPMKYGMKWREDRLLKQQRQSWLNTLAVKAKKGTKRDQNDNHN.

Disordered regions lie at residues 1–44 (MSRS…FEGA) and 61–82 (EGDL…PTQQ). At 1 to 99 (MSRSNSIYTE…PYTLLSYGQK (99 aa)) the chain is on the extracellular side. Positions 19–40 (NEQHLTREYTKPDGQTKSEKLN) are enriched in basic and acidic residues. A helical transmembrane segment spans residues 100-120 (WGMVAILTMCGFWSSLGSPIY). Residues 121–139 (YPALRQLEKQFNVDENMVN) lie on the Cytoplasmic side of the membrane. The chain crosses the membrane as a helical span at residues 140–160 (VTVVVYLLFQGISPTVSGGLA). The Extracellular segment spans residues 161-166 (DCFGRR). The chain crosses the membrane as a helical span at residues 167-187 (PIILAGMLIYVIASIGLACAP). A topological domain (cytoplasmic) is located at residue Ser-188. The helical transmembrane segment at 189-209 (YGVIIFLRCIQSIGISPTIAI) threads the bilayer. The Extracellular segment spans residues 210–225 (SSGVVGDFTLKHERGT). A helical transmembrane segment spans residues 226–246 (FVGATSGFVLLGQCFGSLIGA). At 247–255 (VLTARWDWR) the chain is on the cytoplasmic side. A helical transmembrane segment spans residues 256-276 (AIFWFLTIGCGSCFLIAFLIL). The Extracellular segment spans residues 277 to 334 (PETKRTIAGNLSIKPKRFINRAPIFLLGPVRRRFKYDNPDYETLDPTIPKLDLSSAGK). The chain crosses the membrane as a helical span at residues 335–355 (ILVLPEIILSLFPSGLLFAMW). Residues 356–374 (TLMLSSISSGLSVAPYNYH) are Cytoplasmic-facing. A helical membrane pass occupies residues 375–395 (LVIIGVCYLPGGIGGLMGSFF). Residues 396–433 (TGRIIDMYFKRKIKKFEQDKANGLIPQDAEINMFKVRL) lie on the Extracellular side of the membrane. A helical membrane pass occupies residues 434 to 454 (VCLLPQNFLAVVAYLLFGWSI). At 455–459 (DKGWR) the chain is on the cytoplasmic side. A helical membrane pass occupies residues 460–480 (IESILITSFVCSYCAMSTLST). Topologically, residues 481–523 (STTLLVDLYPTKSSTASSCFNFVRCSLSTIFMGCFAKMKAAMT) are extracellular. The helical transmembrane segment at 524-544 (VGGTFTFLCALVFFFNFLMFI) threads the bilayer. At 545–586 (PMKYGMKWREDRLLKQQRQSWLNTLAVKAKKGTKRDQNDNHN) the chain is on the cytoplasmic side.

This sequence belongs to the major facilitator superfamily. CAR1 family.

It localises to the membrane. Its function is as follows. Probable transporter that confers resistance to short-chain monocarboxylic acids and quinidine. This chain is Probable transporter AQR1 (AQR1), found in Saccharomyces cerevisiae (strain ATCC 204508 / S288c) (Baker's yeast).